A 446-amino-acid chain; its full sequence is Trigger factor (446 aa).

A PPIase FKBP-type domain is found at 163–248; that stretch reads GDIVTIDFKG…VRGIKRKKLA (86 aa). The tract at residues 423–446 is disordered; the sequence is SKPVPPREQGAAGETAETAEATPA. Over residues 432–446 the composition is skewed to low complexity; it reads GAAGETAETAEATPA.

Belongs to the FKBP-type PPIase family. Tig subfamily.

Its subcellular location is the cytoplasm. It catalyses the reaction [protein]-peptidylproline (omega=180) = [protein]-peptidylproline (omega=0). Involved in protein export. Acts as a chaperone by maintaining the newly synthesized protein in an open conformation. Functions as a peptidyl-prolyl cis-trans isomerase. In Moorella thermoacetica (strain ATCC 39073 / JCM 9320), this protein is Trigger factor.